Reading from the N-terminus, the 310-residue chain is Ribosomal RNA small subunit methyltransferase H (310 aa).

Residues 33-35 (AGH), Asp53, Phe79, Asp100, and Gln107 contribute to the S-adenosyl-L-methionine site.

It belongs to the methyltransferase superfamily. RsmH family.

It localises to the cytoplasm. It carries out the reaction cytidine(1402) in 16S rRNA + S-adenosyl-L-methionine = N(4)-methylcytidine(1402) in 16S rRNA + S-adenosyl-L-homocysteine + H(+). In terms of biological role, specifically methylates the N4 position of cytidine in position 1402 (C1402) of 16S rRNA. The protein is Ribosomal RNA small subunit methyltransferase H of Clostridium perfringens (strain 13 / Type A).